Reading from the N-terminus, the 145-residue chain is Large ribosomal subunit protein cL37 (145 aa).

The N-terminal 63 residues, 1-63 (MALLCFNSFT…PRKNSIFIAS (63 aa)), are a transit peptide targeting the chloroplast. A disordered region spans residues 125–145 (KRRLRKKGNWPPSKMKKLEGV).

The protein belongs to the chloroplast-specific ribosomal protein cL37 family. Part of the 50S ribosomal subunit.

The protein resides in the plastid. Its subcellular location is the chloroplast. The polypeptide is Large ribosomal subunit protein cL37 (PSRP5) (Pisum sativum (Garden pea)).